Reading from the N-terminus, the 251-residue chain is Tungstate/molybdate/chromate-binding protein ModA (251 aa).

The first 23 residues, 1–23 (MTTRLPQLLLALLASAVSLAASA), serve as a signal peptide directing secretion. Molybdate-binding residues include threonine 60 and isoleucine 168.

It belongs to the bacterial solute-binding protein ModA family. In terms of assembly, the complex is composed of two ATP-binding proteins (ModC), two transmembrane proteins (ModB) and a solute-binding protein (ModA).

It is found in the periplasm. In terms of biological role, part of the ABC transporter complex ModABC involved in the transport of molybdenum into the cell. Binds tungstate and molybdate. Can also bind chromate, with lower affinity. Plays an essential role in recruitment of molybdate for nitrate reduction. This chain is Tungstate/molybdate/chromate-binding protein ModA, found in Pseudomonas aeruginosa (strain ATCC 15692 / DSM 22644 / CIP 104116 / JCM 14847 / LMG 12228 / 1C / PRS 101 / PAO1).